A 1357-amino-acid chain; its full sequence is DNA-directed RNA polymerase subunit beta (1357 aa).

It belongs to the RNA polymerase beta chain family. The RNAP catalytic core consists of 2 alpha, 1 beta, 1 beta' and 1 omega subunit. When a sigma factor is associated with the core the holoenzyme is formed, which can initiate transcription.

The enzyme catalyses RNA(n) + a ribonucleoside 5'-triphosphate = RNA(n+1) + diphosphate. DNA-dependent RNA polymerase catalyzes the transcription of DNA into RNA using the four ribonucleoside triphosphates as substrates. This is DNA-directed RNA polymerase subunit beta from Pseudomonas aeruginosa (strain UCBPP-PA14).